The sequence spans 344 residues: UDP-3-O-acylglucosamine N-acyltransferase (344 aa).

H248 (proton acceptor) is an active-site residue.

The protein belongs to the transferase hexapeptide repeat family. LpxD subfamily. In terms of assembly, homotrimer.

It catalyses the reaction a UDP-3-O-[(3R)-3-hydroxyacyl]-alpha-D-glucosamine + a (3R)-hydroxyacyl-[ACP] = a UDP-2-N,3-O-bis[(3R)-3-hydroxyacyl]-alpha-D-glucosamine + holo-[ACP] + H(+). It participates in bacterial outer membrane biogenesis; LPS lipid A biosynthesis. Catalyzes the N-acylation of UDP-3-O-acylglucosamine using 3-hydroxyacyl-ACP as the acyl donor. Is involved in the biosynthesis of lipid A, a phosphorylated glycolipid that anchors the lipopolysaccharide to the outer membrane of the cell. This is UDP-3-O-acylglucosamine N-acyltransferase from Prochlorococcus marinus (strain MIT 9312).